The primary structure comprises 191 residues: Putative inactive glutathione hydrolase 4 (191 aa).

Catalysis depends on Thr54, which acts as the Nucleophile. Residues Thr72, Asn74, Glu93, Asp96, 126 to 127 (SS), and 147 to 148 (GG) contribute to the L-glutamate site.

Belongs to the gamma-glutamyltransferase family. As to expression, expressed at low levels in embryo, roots and leaves. In mature plants, expression is restricted to vascular tissues of roots, leaves, flowers and siliques.

This chain is Putative inactive glutathione hydrolase 4 (GGT4), found in Arabidopsis thaliana (Mouse-ear cress).